We begin with the raw amino-acid sequence, 341 residues long: MTDGILGKAATMEIPIHGNGEARQLPEDDGLEQDLQQVMVSGPNLNETSIVSGGYGGSGDGLIPTGSGRHPSHSTTPSGPGDEVARGIAGEKFDIVKKWGINTYKCTKQLLSERFGRGSRTVDLELELQIELLRETKRKYESVLQLGRALTAHLYSLLQTQHALGDAFADLSQKSPELQEEFGYNAETQKLLCKNGETLLGAVNFFVSSINTLVTKTMEDTLMTVKQYEAARLEYDAYRTDLEELSLGPRDAGTRGRLESAQATFQAHRDKYEKLRGDVAIKLKFLEENKIKVMHKQLLLFHNAVSAYFAGNQKQLEQTLQQFNIKLRPPGAEKPSWLEEQ.

Positions 46–85 (NETSIVSGGYGGSGDGLIPTGSGRHPSHSTTPSGPGDEVA) are disordered. A Phosphoserine modification is found at Ser72. Phosphothreonine is present on Thr76. An AH domain is found at 121 to 321 (TVDLELELQI…NQKQLEQTLQ (201 aa)).

In terms of assembly, forms homodimers or heterodimers with ARFIP1. Interacts with RAC1. Specifically binds to GTP-bound ARF1 and ARF6, but binds to RAC1.GTP and RAC1.GDP with similar affinities. Interacts with ARL1. Interacts (via N-terminus) with IKBKB and IKBKG; these interactions inhibit activation of NF-kappa-B.

It is found in the golgi apparatus. The protein resides in the trans-Golgi network membrane. Plays a role in constitutive metalloproteinase (MMP) secretion from the trans Golgi network. May have important functions during vesicle biogenesis at certain cargo subdomains, which could be predominantly utilized by secreted MMPs, such as MMP7 and MMP2. Also involved in autophagy by regulating the starvation-dependent trafficking of ATG9A vesicles which deliver the phosphatidylinositol 4-kinase beta (PI4KB) to the autophagosome initiation site. Involved in phagophore growth during mitophagy by regulating ATG9A trafficking to mitochondria. In addition, plays a role in NF-kappa-B inhibition by interacting with IKBKB and IKBKG. The chain is Arfaptin-2 from Homo sapiens (Human).